Here is a 585-residue protein sequence, read N- to C-terminus: YTH domain-containing family protein 3 (585 aa).

3 disordered regions span residues 1–51, 244–277, and 304–350; these read MSAT…SYPP, KPAK…MNIG, and PQPL…QPQL. Ser2 is subject to N-acetylserine. Over residues 15 to 24 the composition is skewed to polar residues; the sequence is NKVSVQNGSI. Ser23 is modified (phosphoserine). A compositionally biased stretch (basic residues) spans 244–254; it reads KPAKPQPKLKP. Positions 329–350 are enriched in low complexity; the sequence is QQQQGPQPQAQPHQVQSQQPQL. Positions 416–550 constitute a YTH domain; it reads GRVFIIKSYS…EKAKQVLKII (135 aa). RNA-binding positions include 422 to 424, Asp428, 438 to 439, Asn468, Trp492, and Trp497; these read KSY and WC.

It belongs to the YTHDF family. YTHDF3 subfamily. In terms of assembly, interacts with CNOT1; promoting recruitment of the CCR4-NOT complex. Interacts with YTHDF1. Interacts with YTHDF2. Interacts with PAN3.

The protein localises to the cytoplasm. It is found in the cytosol. The protein resides in the P-body. Its subcellular location is the stress granule. Specifically recognizes and binds N6-methyladenosine (m6A)-containing RNAs, and regulates their stability. M6A is a modification present at internal sites of mRNAs and some non-coding RNAs and plays a role in mRNA stability and processing. Acts as a regulator of mRNA stability by promoting degradation of m6A-containing mRNAs via interaction with the CCR4-NOT complex or PAN3. The YTHDF paralogs (YTHDF1, YTHDF2 and YTHDF3) share m6A-containing mRNAs targets and act redundantly to mediate mRNA degradation and cellular differentiation. Acts as a negative regulator of type I interferon response by down-regulating interferon-stimulated genes (ISGs) expression: acts by binding to FOXO3 mRNAs. Binds to FOXO3 mRNAs independently of METTL3-mediated m6A modification. Can also act as a regulator of mRNA stability in cooperation with YTHDF2 by binding to m6A-containing mRNA and promoting their degradation. Recognizes and binds m6A-containing circular RNAs (circRNAs); circRNAs are generated through back-splicing of pre-mRNAs, a non-canonical splicing process promoted by dsRNA structures across circularizing exons. Promotes formation of phase-separated membraneless compartments, such as P-bodies or stress granules, by undergoing liquid-liquid phase separation upon binding to mRNAs containing multiple m6A-modified residues: polymethylated mRNAs act as a multivalent scaffold for the binding of YTHDF proteins, juxtaposing their disordered regions and thereby leading to phase separation. The resulting mRNA-YTHDF complexes then partition into different endogenous phase-separated membraneless compartments, such as P-bodies, stress granules or neuronal RNA granules. May also recognize and bind N1-methyladenosine (m1A)-containing mRNAs: inhibits trophoblast invasion by binding to m1A-methylated transcripts of IGF1R, promoting their degradation. This is YTH domain-containing family protein 3 from Mus musculus (Mouse).